Consider the following 365-residue polypeptide: Histidinol-phosphate aminotransferase (365 aa).

Lysine 223 carries the post-translational modification N6-(pyridoxal phosphate)lysine.

It belongs to the class-II pyridoxal-phosphate-dependent aminotransferase family. Histidinol-phosphate aminotransferase subfamily. As to quaternary structure, homodimer. It depends on pyridoxal 5'-phosphate as a cofactor.

The enzyme catalyses L-histidinol phosphate + 2-oxoglutarate = 3-(imidazol-4-yl)-2-oxopropyl phosphate + L-glutamate. Its pathway is amino-acid biosynthesis; L-histidine biosynthesis; L-histidine from 5-phospho-alpha-D-ribose 1-diphosphate: step 7/9. The protein is Histidinol-phosphate aminotransferase of Brucella melitensis biotype 1 (strain ATCC 23456 / CCUG 17765 / NCTC 10094 / 16M).